Reading from the N-terminus, the 290-residue chain is Programmed cell death 1 ligand 1 (290 aa).

An N-terminal signal peptide occupies residues 1–18 (MRIFAVFIFMTYWHLLNA). An Ig-like V-type domain is found at 19-127 (FTVTVPKDLY…YGGADYKRIT (109 aa)). The Extracellular segment spans residues 19–238 (FTVTVPKDLY…LPLAHPPNER (220 aa)). N-linked (GlcNAc...) asparagine glycosylation occurs at Asn35. 2 cysteine pairs are disulfide-bonded: Cys40–Cys114 and Cys155–Cys209. Residues 133 to 225 (PYNKINQRIL…PEENHTAELV (93 aa)) form the Ig-like C2-type domain. Residues Asn192, Asn200, and Asn219 are each glycosylated (N-linked (GlcNAc...) asparagine). Residues 239–259 (THLVILGAILLCLGVALTFIF) traverse the membrane as a helical segment. Over 260 to 290 (RLRKGRMMDVKKCGIQDTNSKKQSDTHLEET) the chain is Cytoplasmic.

Belongs to the immunoglobulin superfamily. BTN/MOG family. As to quaternary structure, interacts with PDCD1. Interacts (via transmembrane domain) with CMTM4 and CMTM6. Interacts with (phosphorylated) STAT3; promoting nuclear translocation. Interacts with CD80. In terms of assembly, may form homomultimers. Post-translationally, ubiquitinated; STUB1 likely mediates polyubiquitination of PD-L1/CD274 triggering its degradation. Ubiquitinated by MARCHF8; leading to degradation. Deubiquitinated by USP22; leading to stabilization. As to expression, highly expressed in the heart, skeletal muscle, placenta and lung. Weakly expressed in the thymus, spleen, kidney and liver. Expressed on activated T- and B-cells, dendritic cells, keratinocytes and monocytes. In terms of tissue distribution, widely expressed, highest in lung, liver and pituitary and in various peripheral blood cells, including neutrophils and some subtypes of lymphoid and myeloid cells.

It is found in the cell membrane. It localises to the early endosome membrane. The protein localises to the recycling endosome membrane. Its subcellular location is the nucleus. The protein resides in the endomembrane system. It is found in the secreted. Plays a critical role in induction and maintenance of immune tolerance to self. As a ligand for the inhibitory receptor PDCD1/PD-1, modulates the activation threshold of T-cells and limits T-cell effector response. Through a yet unknown activating receptor, may costimulate T-cell subsets that predominantly produce interleukin-10 (IL10). Can also act as a transcription coactivator: in response to hypoxia, translocates into the nucleus via its interaction with phosphorylated STAT3 and promotes transcription of GSDMC, leading to pyroptosis. Functionally, the PDCD1-mediated inhibitory pathway is exploited by tumors to attenuate anti-tumor immunity and escape destruction by the immune system, thereby facilitating tumor survival. The interaction with PDCD1/PD-1 inhibits cytotoxic T lymphocytes (CTLs) effector function. The blockage of the PDCD1-mediated pathway results in the reversal of the exhausted T-cell phenotype and the normalization of the anti-tumor response, providing a rationale for cancer immunotherapy. The chain is Programmed cell death 1 ligand 1 from Homo sapiens (Human).